The following is a 333-amino-acid chain: tRNA-modifying protein YgfZ (333 aa).

2 residues coordinate folate: tryptophan 33 and tryptophan 195.

This sequence belongs to the tRNA-modifying YgfZ family.

The protein localises to the cytoplasm. Its function is as follows. Folate-binding protein involved in regulating the level of ATP-DnaA and in the modification of some tRNAs. It is probably a key factor in regulatory networks that act via tRNA modification, such as initiation of chromosomal replication. The protein is tRNA-modifying protein YgfZ of Pectobacterium atrosepticum (strain SCRI 1043 / ATCC BAA-672) (Erwinia carotovora subsp. atroseptica).